Consider the following 177-residue polypeptide: Large ribosomal subunit protein uL6 (177 aa).

It belongs to the universal ribosomal protein uL6 family. In terms of assembly, part of the 50S ribosomal subunit.

Its function is as follows. This protein binds to the 23S rRNA, and is important in its secondary structure. It is located near the subunit interface in the base of the L7/L12 stalk, and near the tRNA binding site of the peptidyltransferase center. This is Large ribosomal subunit protein uL6 from Cellvibrio japonicus (strain Ueda107) (Pseudomonas fluorescens subsp. cellulosa).